Here is a 621-residue protein sequence, read N- to C-terminus: UvrABC system protein C (621 aa).

Residues 11–90 (TTPGVYLYKD…IKKHRPRYNI (80 aa)) enclose the GIY-YIG domain. One can recognise a UVR domain in the interval 200-235 (KELVELLQKDMLYASEALEFEKAATLRDQIQAIKHT).

Belongs to the UvrC family. In terms of assembly, interacts with UvrB in an incision complex.

The protein localises to the cytoplasm. Functionally, the UvrABC repair system catalyzes the recognition and processing of DNA lesions. UvrC both incises the 5' and 3' sides of the lesion. The N-terminal half is responsible for the 3' incision and the C-terminal half is responsible for the 5' incision. The protein is UvrABC system protein C of Lawsonia intracellularis (strain PHE/MN1-00).